Consider the following 201-residue polypeptide: UPF0301 protein ROP_34500 (201 aa).

It belongs to the UPF0301 (AlgH) family.

The protein is UPF0301 protein ROP_34500 of Rhodococcus opacus (strain B4).